We begin with the raw amino-acid sequence, 470 residues long: Nuclear receptor subfamily 0 group B member 1 (470 aa).

A run of 3 repeats spans residues 1-67 (MAGE…YRCC), 68-133 (FCGK…YRCC), and 134-200 (FCGE…YRCC). A 4 X 67 AA tandem repeats region spans residues 1 to 253 (MAGENHQWQG…RPVALKNPQV (253 aa)). Short sequence motifs (LXXLL motif) lie at residues 13–17 (LYNML), 80–84 (LYSML), and 146–150 (LYSLL). One copy of the 4; truncated repeat lies at 201-253 (FCGEDHPQQGSTLYCMPTSTNQAQAAPEERPRAPWWDTSSGALRPVALKNPQV). The NR LBD domain maps to 205-469 (DHPQQGSTLY…DMMLEMLCTK (265 aa)). Positions 461 to 466 (MMLEML) match the AF-2 motif motif.

This sequence belongs to the nuclear hormone receptor family. NR0 subfamily. In terms of assembly, homodimer. Interacts with NR5A1, NR5A2, NR0B2 and with COPS2. Interacts with ESRRB; represses ESRRB activity at the GATA6 promoter.

The protein localises to the nucleus. The protein resides in the cytoplasm. In terms of biological role, nuclear receptor that lacks a DNA-binding domain and acts as a corepressor that inhibits the transcriptional activity of other nuclear receptors through heterodimeric interactions. Component of a cascade required for the development of the hypothalamic-pituitary-adrenal-gonadal axis. May also have a role in the development of the embryo and in the maintenance of embryonic stem cell pluripotency. In Macaca mulatta (Rhesus macaque), this protein is Nuclear receptor subfamily 0 group B member 1 (NR0B1).